We begin with the raw amino-acid sequence, 117 residues long: Immunoglobulin heavy variable 1-24 (117 aa).

The N-terminal stretch at 1–19 is a signal peptide; the sequence is MDCTWRILFLVAAATGTHA. The segment at 20-44 is framework-1; the sequence is QVQLVQSGAEVKKPGASVKVSCKVS. Residues 20–117 form the Ig-like domain; that stretch reads QVQLVQSGAE…EDTAVYYCAT (98 aa). A disulfide bond links cysteine 41 and cysteine 115. Residues 45 to 52 are complementarity-determining-1; that stretch reads GYTLTELS. Residues 53–69 are framework-2; it reads MHWVRQAPGKGLEWMGG. The segment at 70 to 77 is complementarity-determining-2; sequence FDPEDGET. Residues 78–115 are framework-3; it reads IYAQKFQGRVTMTEDTSTDTAYMELSSLRSEDTAVYYC. The complementarity-determining-3 stretch occupies residues 116–117; it reads AT.

As to quaternary structure, immunoglobulins are composed of two identical heavy chains and two identical light chains; disulfide-linked.

It localises to the secreted. It is found in the cell membrane. Functionally, v region of the variable domain of immunoglobulin heavy chains that participates in the antigen recognition. Immunoglobulins, also known as antibodies, are membrane-bound or secreted glycoproteins produced by B lymphocytes. In the recognition phase of humoral immunity, the membrane-bound immunoglobulins serve as receptors which, upon binding of a specific antigen, trigger the clonal expansion and differentiation of B lymphocytes into immunoglobulins-secreting plasma cells. Secreted immunoglobulins mediate the effector phase of humoral immunity, which results in the elimination of bound antigens. The antigen binding site is formed by the variable domain of one heavy chain, together with that of its associated light chain. Thus, each immunoglobulin has two antigen binding sites with remarkable affinity for a particular antigen. The variable domains are assembled by a process called V-(D)-J rearrangement and can then be subjected to somatic hypermutations which, after exposure to antigen and selection, allow affinity maturation for a particular antigen. The chain is Immunoglobulin heavy variable 1-24 from Homo sapiens (Human).